Consider the following 514-residue polypeptide: 1,25-dihydroxyvitamin D(3) 24-hydroxylase, mitochondrial (514 aa).

Residues 1–35 (MSCPIDKRRPLIAFLRRLRDLGQPPRSVTSKAHVK) constitute a mitochondrion transit peptide. A heme-binding site is contributed by Cys-462.

This sequence belongs to the cytochrome P450 family. Heme is required as a cofactor.

The protein resides in the mitochondrion. It catalyses the reaction calcitriol + 2 reduced [adrenodoxin] + O2 + 2 H(+) = calcitetrol + 2 oxidized [adrenodoxin] + H2O. It carries out the reaction calcitetrol + 2 reduced [adrenodoxin] + O2 + 2 H(+) = (1S)-1,25-dihydroxy-24-oxocalciol + 2 oxidized [adrenodoxin] + 2 H2O. The enzyme catalyses (1S)-1,25-dihydroxy-24-oxocalciol + 2 reduced [adrenodoxin] + O2 + 2 H(+) = (1S)-1,23,25-trihydroxy-24-oxocalciol + 2 oxidized [adrenodoxin] + H2O. The catalysed reaction is (1S)-1,23-dihydroxy-24,25,26,27-tetranorcalciol + 2 reduced [adrenodoxin] + O2 + 2 H(+) = (1S)-1-hydroxy-23-oxo-24,25,26,27-tetranorcalciol + 2 oxidized [adrenodoxin] + 2 H2O. It catalyses the reaction (1S)-1-hydroxy-23-oxo-24,25,26,27-tetranorcalciol + 2 reduced [adrenodoxin] + O2 + H(+) = calcitroate + 2 oxidized [adrenodoxin] + H2O. It carries out the reaction calcidiol + 2 reduced [adrenodoxin] + O2 + 2 H(+) = secalciferol + 2 oxidized [adrenodoxin] + H2O. The enzyme catalyses secalciferol + 2 reduced [adrenodoxin] + O2 + 2 H(+) = 25-hydroxy-24-oxocalciol + 2 oxidized [adrenodoxin] + 2 H2O. The catalysed reaction is 25-hydroxy-24-oxocalciol + 2 reduced [adrenodoxin] + O2 + 2 H(+) = 23S,25-dihydroxy-24-oxocholecalciferol + 2 oxidized [adrenodoxin] + H2O. It catalyses the reaction 20S,23-dihydroxycholecalciferol + 2 reduced [adrenodoxin] + O2 + 2 H(+) = 20S,23,25-trihydroxycholecalciferol + 2 oxidized [adrenodoxin] + H2O. It carries out the reaction 20S,23-dihydroxycholecalciferol + 2 reduced [adrenodoxin] + O2 + 2 H(+) = 20S,23,24-trihydroxycholecalciferol + 2 oxidized [adrenodoxin] + H2O. The enzyme catalyses 20S-hydroxycholecalciferol + 2 reduced [adrenodoxin] + O2 + 2 H(+) = 20S,25-dihydroxycholecalciferol + 2 oxidized [adrenodoxin] + H2O. The catalysed reaction is 20S-hydroxycholecalciferol + 2 reduced [adrenodoxin] + O2 + 2 H(+) = 20S,24S-dihydroxycholecalciferol + 2 oxidized [adrenodoxin] + H2O. It catalyses the reaction 20S-hydroxycholecalciferol + 2 reduced [adrenodoxin] + O2 + 2 H(+) = 20S,24R-dihydroxycholecalciferol + 2 oxidized [adrenodoxin] + H2O. Its function is as follows. A cytochrome P450 monooxygenase with a key role in vitamin D catabolism and calcium homeostasis. Via C24-oxidation pathway, catalyzes the inactivation of both the vitamin D precursor calcidiol (25-hydroxyvitamin D(3)) and the active hormone calcitriol (1-alpha,25-dihydroxyvitamin D(3)). With initial hydroxylation at C-24 (via C24-oxidation pathway), performs a sequential 6-step oxidation of calcitriol leading to the formation of the biliary metabolite calcitroic acid. Hydroxylates at C-24 or C-25 other vitamin D active metabolites, such as CYP11A1-derived secosteroids 20S-hydroxycholecalciferol and 20S,23-dihydroxycholecalciferol. Mechanistically, uses molecular oxygen inserting one oxygen atom into a substrate, and reducing the second into a water molecule, with two electrons provided by NADPH via FDXR/adrenodoxin reductase and FDX1/adrenodoxin. The polypeptide is 1,25-dihydroxyvitamin D(3) 24-hydroxylase, mitochondrial (Mus musculus (Mouse)).